The primary structure comprises 333 residues: S-adenosylmethionine-dependent nucleotide dehydratase (333 aa).

The region spanning 1–239 (MNIKTIVINW…SAPQKQNNVI (239 aa)) is the Radical SAM core domain. Cysteine 16, cysteine 20, and cysteine 23 together coordinate [4Fe-4S] cluster.

It belongs to the radical SAM superfamily. Viperin family. [4Fe-4S] cluster is required as a cofactor.

The enzyme catalyses GTP + AH2 + S-adenosyl-L-methionine = 3'-deoxy-3',4'-didehydro-GTP + 5'-deoxyadenosine + L-methionine + A + H2O + H(+). In terms of biological role, expression of pVip56 in E.coli (strain MG1655) confers resistance to phage P1; has no effect against T7. Catalyzes the conversion of guanosine triphosphate (GTP) to 3'-deoxy-3',4'-didehydro-GTP (ddhGTP), probably via a SAM-dependent radical mechanism. The modified nucleotide represses transcription from T7 RNA polymerase-directed genes (possibly by acting as chain terminators), strongly suggesting these nucleotides block viral polymerase transcription. How this protein allows bacteria to resist viruses that do not encode their own RNA polymerase (such as lambda, P1) is unknown. The sequence is that of S-adenosylmethionine-dependent nucleotide dehydratase from Fibrobacter sp. (strain UWH6).